Reading from the N-terminus, the 377-residue chain is Phospho-N-acetylmuramoyl-pentapeptide-transferase (377 aa).

11 consecutive transmembrane segments (helical) span residues 9–29, 62–82, 85–105, 122–142, 155–175, 178–198, 210–230, 247–267, 274–294, 299–319, and 354–374; these read YITLRAVLACATALLIGLVAG, MGGALILIAIAISTLLWADWI, FVWVVLLVTFGFGWIGWMDDY, FFWQATIGLVAAVYLAFAVSA, WVGSGFTMPLPTRADLIVPFF, VSYPLGVLGFVALTWAVIVGT, GLAIMPTVMVGSALGIFAYVV, AAELMVLCAAIGGAGLAFLWF, VFMGDVGALALGGALGTIAVI, IVLFIMGGVFVVETLSVMVQV, and QVVVRFWIITMMLVLVGLSTL.

It belongs to the glycosyltransferase 4 family. MraY subfamily. Requires Mg(2+) as cofactor.

It localises to the cell inner membrane. The enzyme catalyses UDP-N-acetyl-alpha-D-muramoyl-L-alanyl-gamma-D-glutamyl-meso-2,6-diaminopimeloyl-D-alanyl-D-alanine + di-trans,octa-cis-undecaprenyl phosphate = di-trans,octa-cis-undecaprenyl diphospho-N-acetyl-alpha-D-muramoyl-L-alanyl-D-glutamyl-meso-2,6-diaminopimeloyl-D-alanyl-D-alanine + UMP. It functions in the pathway cell wall biogenesis; peptidoglycan biosynthesis. Catalyzes the initial step of the lipid cycle reactions in the biosynthesis of the cell wall peptidoglycan: transfers peptidoglycan precursor phospho-MurNAc-pentapeptide from UDP-MurNAc-pentapeptide onto the lipid carrier undecaprenyl phosphate, yielding undecaprenyl-pyrophosphoryl-MurNAc-pentapeptide, known as lipid I. The sequence is that of Phospho-N-acetylmuramoyl-pentapeptide-transferase from Bordetella parapertussis (strain 12822 / ATCC BAA-587 / NCTC 13253).